Consider the following 364-residue polypeptide: 3-isopropylmalate dehydrogenase (364 aa).

78 to 91 contacts NAD(+); that stretch reads GKKWDYLSIDKRPE. Substrate is bound by residues R99, R109, R138, and D227. Residues D227, D251, and D255 each coordinate Mg(2+). 285–297 serves as a coordination point for NAD(+); that stretch reads GSAPDIAGKNIAN.

The protein belongs to the isocitrate and isopropylmalate dehydrogenases family. LeuB type 1 subfamily. As to quaternary structure, homodimer. It depends on Mg(2+) as a cofactor. Mn(2+) serves as cofactor.

It localises to the cytoplasm. The enzyme catalyses (2R,3S)-3-isopropylmalate + NAD(+) = 4-methyl-2-oxopentanoate + CO2 + NADH. The protein operates within amino-acid biosynthesis; L-leucine biosynthesis; L-leucine from 3-methyl-2-oxobutanoate: step 3/4. Its function is as follows. Catalyzes the oxidation of 3-carboxy-2-hydroxy-4-methylpentanoate (3-isopropylmalate) to 3-carboxy-4-methyl-2-oxopentanoate. The product decarboxylates to 4-methyl-2 oxopentanoate. This chain is 3-isopropylmalate dehydrogenase, found in Buchnera aphidicola subsp. Uroleucon erigeronensis.